A 450-amino-acid polypeptide reads, in one-letter code: Bifunctional protein GlmU (450 aa).

A pyrophosphorylase region spans residues 1-236 (MTAHKPFSAV…AWEVSGVNNR (236 aa)). Residues 12-15 (LAAG), Lys-26, Gln-79, 84-85 (GT), 107-109 (YGD), Gly-147, Glu-162, Asn-177, and Asn-234 contribute to the UDP-N-acetyl-alpha-D-glucosamine site. A Mg(2+)-binding site is contributed by Asp-109. Asn-234 contacts Mg(2+). Residues 237–257 (AELASLESLWQNRKRQDVMKD) are linker. An N-acetyltransferase region spans residues 258 to 450 (GASLIAPETV…KKFRQRKKKK (193 aa)). Positions 323 and 341 each coordinate UDP-N-acetyl-alpha-D-glucosamine. Residue His-353 is the Proton acceptor of the active site. UDP-N-acetyl-alpha-D-glucosamine-binding residues include Tyr-356 and Asn-367. Acetyl-CoA is bound by residues 376–377 (NY), Ser-395, Ala-413, and Arg-430.

The protein in the N-terminal section; belongs to the N-acetylglucosamine-1-phosphate uridyltransferase family. In the C-terminal section; belongs to the transferase hexapeptide repeat family. As to quaternary structure, homotrimer. Requires Mg(2+) as cofactor.

Its subcellular location is the cytoplasm. The catalysed reaction is alpha-D-glucosamine 1-phosphate + acetyl-CoA = N-acetyl-alpha-D-glucosamine 1-phosphate + CoA + H(+). It carries out the reaction N-acetyl-alpha-D-glucosamine 1-phosphate + UTP + H(+) = UDP-N-acetyl-alpha-D-glucosamine + diphosphate. Its pathway is nucleotide-sugar biosynthesis; UDP-N-acetyl-alpha-D-glucosamine biosynthesis; N-acetyl-alpha-D-glucosamine 1-phosphate from alpha-D-glucosamine 6-phosphate (route II): step 2/2. The protein operates within nucleotide-sugar biosynthesis; UDP-N-acetyl-alpha-D-glucosamine biosynthesis; UDP-N-acetyl-alpha-D-glucosamine from N-acetyl-alpha-D-glucosamine 1-phosphate: step 1/1. It functions in the pathway bacterial outer membrane biogenesis; LPS lipid A biosynthesis. Catalyzes the last two sequential reactions in the de novo biosynthetic pathway for UDP-N-acetylglucosamine (UDP-GlcNAc). The C-terminal domain catalyzes the transfer of acetyl group from acetyl coenzyme A to glucosamine-1-phosphate (GlcN-1-P) to produce N-acetylglucosamine-1-phosphate (GlcNAc-1-P), which is converted into UDP-GlcNAc by the transfer of uridine 5-monophosphate (from uridine 5-triphosphate), a reaction catalyzed by the N-terminal domain. The polypeptide is Bifunctional protein GlmU (Zymomonas mobilis subsp. mobilis (strain ATCC 31821 / ZM4 / CP4)).